We begin with the raw amino-acid sequence, 264 residues long: tRNA (guanine-N(1)-)-methyltransferase (264 aa).

Residues G125 and 145-150 contribute to the S-adenosyl-L-methionine site; that span reads LGDFVL.

It belongs to the RNA methyltransferase TrmD family. In terms of assembly, homodimer.

The protein resides in the cytoplasm. The catalysed reaction is guanosine(37) in tRNA + S-adenosyl-L-methionine = N(1)-methylguanosine(37) in tRNA + S-adenosyl-L-homocysteine + H(+). Its function is as follows. Specifically methylates guanosine-37 in various tRNAs. This chain is tRNA (guanine-N(1)-)-methyltransferase, found in Burkholderia lata (strain ATCC 17760 / DSM 23089 / LMG 22485 / NCIMB 9086 / R18194 / 383).